The chain runs to 293 residues: Small ribosomal subunit protein uS3 (293 aa).

The 72-residue stretch at 39 to 110 (IRREIMKFLK…KISIKIKEVK (72 aa)) folds into the KH type-2 domain.

The protein belongs to the universal ribosomal protein uS3 family. Part of the 30S ribosomal subunit. Forms a tight complex with proteins S10 and S14.

Binds the lower part of the 30S subunit head. Binds mRNA in the 70S ribosome, positioning it for translation. This chain is Small ribosomal subunit protein uS3, found in Borreliella burgdorferi (strain ATCC 35210 / DSM 4680 / CIP 102532 / B31) (Borrelia burgdorferi).